Here is a 464-residue protein sequence, read N- to C-terminus: Cyclic 2,3-diphosphoglycerate synthetase (464 aa).

It belongs to the cyclic 2,3-diphosphoglycerate synthetase family.

It localises to the cytoplasm. It carries out the reaction (2R)-2,3-bisphosphoglycerate + ATP + H(+) = cyclic (2R)-2,3-bisphosphoglycerate + ADP + phosphate. With respect to regulation, activity decreases in response to phosphate limitation. Its function is as follows. Catalyzes the formation of cyclic 2,3-diphosphoglycerate (cDPG) by formation of an intramolecular phosphoanhydride bond at the expense of ATP. Not able to catalyze cDPG hydrolysis. May be involved in osmotic balance. The sequence is that of Cyclic 2,3-diphosphoglycerate synthetase (cpgS) from Methanothermobacter thermautotrophicus (strain ATCC 29096 / DSM 1053 / JCM 10044 / NBRC 100330 / Delta H) (Methanobacterium thermoautotrophicum).